Consider the following 306-residue polypeptide: Agmatinase (306 aa).

Mn(2+) is bound by residues His126, Asp149, His151, Asp153, Asp230, and Asp232.

Belongs to the arginase family. Agmatinase subfamily. Mn(2+) serves as cofactor.

The catalysed reaction is agmatine + H2O = urea + putrescine. The protein operates within amine and polyamine biosynthesis; putrescine biosynthesis via agmatine pathway; putrescine from agmatine: step 1/1. In terms of biological role, catalyzes the formation of putrescine from agmatine. In Shigella sonnei (strain Ss046), this protein is Agmatinase.